We begin with the raw amino-acid sequence, 508 residues long: MQYLQFLSLVVLLLMCHARKSVYRRNSPSLRRLTRNYDWEVDEHGGLKPIINPAKVERATKNCANDSFILGTIMSNYNRHKIPGGQVDVEVEVWVQEITTISDITSDFQLDIYIYETWYDPALNYAFMNPCKYNLSLNSVLLEKLWTPNSCFINSKTADIHKSPFPNIFLMIYANGTVWTNYRLKLQGPCIMDLTKFPFDNVTCSLTFESFNYNTDEVKMDWSVNGVQKMRDKMELADYELVDIHKIRTTEEYPAGYWHELTMSFEFKRRAGWYILQAYLPTYLTICISWISFALGSKAIPARTMLGVNSLLAMTFQFGNIIRNLPRVSYVKAIDVWMLSCMTFVFCSLLELAWVGYLSREEEPTSAKCLQPSAQVAPKPCHPPPVQQNANNSSVHRRQKQPKNEEESALLSLRDNDYGYIPPGFGLNGNVANAMKSFSSSCSCEPTNVVNLMLDEAETIPTSTSSSLSRKQRREILAHKIDSVSVFMFPFLFVLFNIAYWQHYLRGY.

An N-terminal signal peptide occupies residues 1–18; it reads MQYLQFLSLVVLLLMCHA. The Extracellular segment spans residues 19 to 274; it reads RKSVYRRNSP…FEFKRRAGWY (256 aa). N-linked (GlcNAc...) asparagine glycosylation is found at asparagine 65, asparagine 134, asparagine 175, and asparagine 201. Cysteines 190 and 204 form a disulfide. The helical transmembrane segment at 275–295 threads the bilayer; the sequence is ILQAYLPTYLTICISWISFAL. The Cytoplasmic segment spans residues 296-301; it reads GSKAIP. Residues 302–321 traverse the membrane as a helical segment; the sequence is ARTMLGVNSLLAMTFQFGNI. Topologically, residues 322–335 are extracellular; that stretch reads IRNLPRVSYVKAID. Residues 336 to 356 traverse the membrane as a helical segment; the sequence is VWMLSCMTFVFCSLLELAWVG. Topologically, residues 357 to 480 are cytoplasmic; it reads YLSREEEPTS…KQRREILAHK (124 aa). Residues 374 to 407 form a disordered region; sequence AQVAPKPCHPPPVQQNANNSSVHRRQKQPKNEEE. Residues 481–501 form a helical membrane-spanning segment; that stretch reads IDSVSVFMFPFLFVLFNIAYW. Residues 502–508 are Extracellular-facing; that stretch reads QHYLRGY.

The protein belongs to the ligand-gated ion channel (TC 1.A.9) family. As to expression, expressed in the nervous system, with high expression in cholinergic motor neurons and weak expression in GABAergic motor neurons.

It localises to the presynaptic cell membrane. Its subcellular location is the cell projection. The protein localises to the axon. The protein resides in the cytoplasmic vesicle. It is found in the secretory vesicle. It localises to the synaptic vesicle. In terms of biological role, probable component of a ligand-gated anion channel. Negatively regulates synaptic transmission and synaptic vesicle release in response to acetylcholine in cholinergic motor neurons. Role in synaptic vesicle release kinetics may be in association with the ligand-gated ion channel protein acc-4. This chain is Probable ligand-gated ion channel 46, found in Caenorhabditis elegans.